We begin with the raw amino-acid sequence, 438 residues long: 23S rRNA (uracil(1939)-C(5))-methyltransferase RlmD (438 aa).

Positions 10–69 (KASVNTKHQSVDVVRLDHNGAGIAFVDKKPVFIEGALPGEKAIIQFIEQKKQFSRAKLIK) constitute a TRAM domain. The [4Fe-4S] cluster site is built by cysteine 82, cysteine 88, cysteine 91, and cysteine 169. S-adenosyl-L-methionine is bound by residues glutamine 272, phenylalanine 301, asparagine 306, glutamate 322, asparagine 349, and aspartate 370. The active-site Nucleophile is the cysteine 396.

This sequence belongs to the class I-like SAM-binding methyltransferase superfamily. RNA M5U methyltransferase family. RlmD subfamily.

The catalysed reaction is uridine(1939) in 23S rRNA + S-adenosyl-L-methionine = 5-methyluridine(1939) in 23S rRNA + S-adenosyl-L-homocysteine + H(+). In terms of biological role, catalyzes the formation of 5-methyl-uridine at position 1939 (m5U1939) in 23S rRNA. This Aliivibrio fischeri (strain ATCC 700601 / ES114) (Vibrio fischeri) protein is 23S rRNA (uracil(1939)-C(5))-methyltransferase RlmD.